The chain runs to 181 residues: Inner membrane-spanning protein YciB (181 aa).

A run of 5 helical transmembrane segments spans residues 24 to 44 (SATA…WLRH), 49 to 69 (NMLW…LILQ), 81 to 101 (LYWL…KNLI), 119 to 139 (LNIS…YVAY), and 149 to 169 (FKLF…ALLL).

This sequence belongs to the YciB family.

It is found in the cell inner membrane. Its function is as follows. Plays a role in cell envelope biogenesis, maintenance of cell envelope integrity and membrane homeostasis. This is Inner membrane-spanning protein YciB from Nitrosomonas eutropha (strain DSM 101675 / C91 / Nm57).